The sequence spans 259 residues: Thrombin-like enzyme gyroxin B1.7 (259 aa).

Residues 1-18 (MVLIRVLANLLILQLSYA) form the signal peptide. Positions 19–259 (QKSSELVIGG…AGNTAVTCPP (241 aa)) are excised as a propeptide. Residues 25–250 (VIGGDECNIN…DTEWIQSIIA (226 aa)) form the Peptidase S1 domain. Cystine bridges form between Cys-31–Cys-162, Cys-49–Cys-65, Cys-141–Cys-211, Cys-173–Cys-190, and Cys-201–Cys-226. His-64 (charge relay system) is an active-site residue. The N-linked (GlcNAc...) asparagine glycan is linked to Asn-102. Asp-109 (charge relay system) is an active-site residue. Ser-205 functions as the Charge relay system in the catalytic mechanism.

This sequence belongs to the peptidase S1 family. Snake venom subfamily. Monomer. Expressed by the venom gland.

It is found in the secreted. In terms of biological role, thrombin-like snake venom serine protease. Displays a specificity similar to trypsin. Releases only fibrinopeptide A in the conversion of fibrinogen to fibrin. Shows coagulant, esterase and amidase activities. Reversibly increases the permeability of the blood brain barrier (BBB) in mice. Induces the barrel rotation syndrome in mice, which is manifested by gyroxin-like, rapid rolling motions. This syndrome may be due to its effect on BBB permeability, and certainly also to other actions affecting endogenous substrates present in the endothelium, nervous tissues or blood. In Crotalus durissus terrificus (South American rattlesnake), this protein is Thrombin-like enzyme gyroxin B1.7.